Here is a 334-residue protein sequence, read N- to C-terminus: MKKIRPLTEADVTAESAFFMQRRQVLKALGISAAALSLPSTAQADLLSWFKGNDRPKAPVGKPLEFSQPAAWRSDLALTPEDKVTGYNNFYEFGLDKADPAANAGSLKTEPWTLKISGEVAKPYTLDYDDLTHRFPLEERIYRMRCVEAWSMVVPWIGFPLYKLLTQAQPTSHAKYVAFETLYAPDDMPGQKDRFVGGGLKYPYVEGLRLDEAMHPLTLMTVGVYGKALPPQNGAPIRLIVPWKYGFKGIKSIVSIKLTRERPPTTWNLSAPNEYGFYANVNPHVDHPRWSQATERFIGSGGILDVQRQPTLLFNGYASEVASLYRGLNLRENF.

Positions 1–44 (MKKIRPLTEADVTAESAFFMQRRQVLKALGISAAALSLPSTAQA) form a signal peptide, tat-type signal. Residues N88, 91 to 92 (YE), C146, T181, N233, R238, and 249 to 251 (GIK) contribute to the Mo-molybdopterin site.

The protein belongs to the MsrP family. As to quaternary structure, heterodimer of a catalytic subunit (MsrP) and a heme-binding subunit (MsrQ). Mo-molybdopterin is required as a cofactor. Post-translationally, predicted to be exported by the Tat system. The position of the signal peptide cleavage has not been experimentally proven.

It is found in the periplasm. It carries out the reaction L-methionyl-[protein] + a quinone + H2O = L-methionyl-(S)-S-oxide-[protein] + a quinol. It catalyses the reaction L-methionyl-[protein] + a quinone + H2O = L-methionyl-(R)-S-oxide-[protein] + a quinol. Its function is as follows. Part of the MsrPQ system that repairs oxidized periplasmic proteins containing methionine sulfoxide residues (Met-O), using respiratory chain electrons. Thus protects these proteins from oxidative-stress damage caused by reactive species of oxygen and chlorine generated by the host defense mechanisms. MsrPQ is essential for the maintenance of envelope integrity under bleach stress, rescuing a wide series of structurally unrelated periplasmic proteins from methionine oxidation, including the primary periplasmic chaperone SurA and the lipoprotein Pal. The catalytic subunit MsrP is non-stereospecific, being able to reduce both (R-) and (S-) diastereoisomers of methionine sulfoxide. This chain is Protein-methionine-sulfoxide reductase catalytic subunit MsrP, found in Salmonella arizonae (strain ATCC BAA-731 / CDC346-86 / RSK2980).